We begin with the raw amino-acid sequence, 156 residues long: Large ribosomal subunit protein uL15 (156 aa).

The disordered stretch occupies residues 1–56; it reads MDLSNLKPAEGATQAGQRLGRGEGSGRGGHSSTRGTKGQSSRSGSGTRPIWFEGGQ.

This sequence belongs to the universal ribosomal protein uL15 family. In terms of assembly, part of the 50S ribosomal subunit.

In terms of biological role, binds to the 23S rRNA. The chain is Large ribosomal subunit protein uL15 from Salinibacter ruber (strain DSM 13855 / M31).